The primary structure comprises 529 residues: VIN3-like protein 3 (529 aa).

Residues 97–104 carry the Nuclear localization signal motif; it reads PKRQKRDL. The PHD-type zinc finger occupies 137-207; that stretch reads RCSCCICFKY…CFNCVSCGKT (71 aa). The Nuclear localization signal signature appears at 214 to 221; it reads LKKQLIIA. In terms of domain architecture, Fibronectin type-III spans 312-411; it reads GSMKIRIESV…FIVSTKTLQD (100 aa). Residues 421 to 529 are VIN3-Interacting Domain (VID); that stretch reads MSNCNNANKM…AGVSLILLQD (109 aa).

Interacts with VIN3.

The protein resides in the nucleus. Functionally, involved in both the vernalization and photoperiod pathways by regulating gene expression. The chain is VIN3-like protein 3 (VIL3) from Arabidopsis thaliana (Mouse-ear cress).